The sequence spans 829 residues: Periplasmic nitrate reductase (829 aa).

A signal peptide (tat-type signal) is located at residues 1–30 (MKMTRRAFVKANAAASAAAVAGITLPASAA). Positions 41–97 (ITWDKAPCRFCGTGCSVLVGTQNGKVVATQGDPEAPVNKGLNCIKGYFLSKIMYGQD) constitute a 4Fe-4S Mo/W bis-MGD-type domain. [4Fe-4S] cluster contacts are provided by Cys-48, Cys-51, Cys-55, and Cys-83. Mo-bis(molybdopterin guanine dinucleotide)-binding positions include Lys-85, Gln-152, Asn-177, Cys-181, 214-221 (WGSNMAEM), 245-249 (STYYH), 264-266 (QSD), Met-374, Gln-378, Asn-484, 510-511 (SD), Lys-533, Asp-560, and 718-727 (TGRVLEHWHT). Phe-794 serves as a coordination point for substrate. Residues Asn-802 and Lys-819 each contribute to the Mo-bis(molybdopterin guanine dinucleotide) site.

Belongs to the prokaryotic molybdopterin-containing oxidoreductase family. NasA/NapA/NarB subfamily. Component of the periplasmic nitrate reductase NapAB complex composed of NapA and NapB. [4Fe-4S] cluster is required as a cofactor. Mo-bis(molybdopterin guanine dinucleotide) serves as cofactor. Post-translationally, predicted to be exported by the Tat system. The position of the signal peptide cleavage has not been experimentally proven.

It is found in the periplasm. It carries out the reaction 2 Fe(II)-[cytochrome] + nitrate + 2 H(+) = 2 Fe(III)-[cytochrome] + nitrite + H2O. Functionally, catalytic subunit of the periplasmic nitrate reductase complex NapAB. Receives electrons from NapB and catalyzes the reduction of nitrate to nitrite. This chain is Periplasmic nitrate reductase, found in Vibrio vulnificus (strain CMCP6).